A 374-amino-acid polypeptide reads, in one-letter code: All-trans-retinol dehydrogenase [NAD(+)] ADH7 (374 aa).

Met1 is modified (N-acetylmethionine). The Zn(2+) site is built by Cys47, His68, Cys98, Cys101, Cys104, Cys112, and Cys174. NAD(+) is bound by residues 199–204 (GLGGVG), Asp223, Lys228, 292–294 (VGA), and Arg369.

This sequence belongs to the zinc-containing alcohol dehydrogenase family. Class-IV subfamily. Homodimer. It depends on Zn(2+) as a cofactor. As to expression, preferentially expressed in stomach.

Its subcellular location is the cytoplasm. The catalysed reaction is a primary alcohol + NAD(+) = an aldehyde + NADH + H(+). The enzyme catalyses 10-hydroxydecanoate + NAD(+) = 10-oxodecanoate + NADH + H(+). It catalyses the reaction all-trans-retinol + NAD(+) = all-trans-retinal + NADH + H(+). It carries out the reaction 9-cis-retinol + NAD(+) = 9-cis-retinal + NADH + H(+). The catalysed reaction is all-trans-3,4-didehydroretinol + NAD(+) = all-trans-3,4-didehydroretinal + NADH + H(+). The enzyme catalyses all-trans-4-hydroxyretinol + NAD(+) = all-trans-4-hydroxyretinal + NADH + H(+). It catalyses the reaction all-trans-4-oxoretinol + NAD(+) = all-trans-4-oxoretinal + NADH + H(+). It carries out the reaction 12-hydroxydodecanoate + NAD(+) = 12-oxododecanoate + NADH + H(+). The catalysed reaction is 16-hydroxyhexadecanoate + NAD(+) = 16-oxohexadecanoate + NADH + H(+). The enzyme catalyses hexan-1-ol + NAD(+) = hexanal + NADH + H(+). It catalyses the reaction (E)-hex-2-en-1-ol + NAD(+) = (E)-hex-2-enal + NADH + H(+). It carries out the reaction (E)-4-hydroxynon-2-en-1-ol + NAD(+) = (E)-4-hydroxynon-2-enal + NADH + H(+). Its activity is regulated as follows. Retinol oxidation is inhibited by the detergent Tween 80. Ethanol inhibits both all-trans-retinol and 9-cis-retinol oxidation. 13-cis-retinol is an effective competitive inhibitor of the 9-cis-retinol oxidation. All-trans-retinoic acid is a powerful inhibitor of all-trans-retinol oxidation. 13-cis-retinoic acid is a powerful inhibitor of all-trans-retinol oxidation. Cimetidine and ranitidine inhibited ethanol oxidation. Its function is as follows. Catalyzes the NAD-dependent oxidation of all-trans-retinol, alcohol, aldehyde and omega-hydroxy fatty acids and their derivatives. Oxidizes preferentially all trans-retinol, all-trans-4-hydroxyretinol, 9-cis-retinol, 2-hexenol, and long chain omega-hydroxy fatty acids such as juniperic acid. In vitro can also catalyze the NADH-dependent reduction of all-trans-retinal and aldehydes and their derivatives. Reduces preferentially all trans-retinal, all-trans-4-oxoretinal and hexanal. Catalyzes in the oxidative direction with higher efficiency. Therefore may participate in retinoid metabolism, fatty acid omega-oxidation, and elimination of cytotoxic aldehydes produced by lipid peroxidation. In Rattus norvegicus (Rat), this protein is All-trans-retinol dehydrogenase [NAD(+)] ADH7 (Adh7).